Here is a 437-residue protein sequence, read N- to C-terminus: tRNA(Ile)-lysidine synthase (437 aa).

22-27 lines the ATP pocket; sequence SGGLDS.

Belongs to the tRNA(Ile)-lysidine synthase family.

Its subcellular location is the cytoplasm. The catalysed reaction is cytidine(34) in tRNA(Ile2) + L-lysine + ATP = lysidine(34) in tRNA(Ile2) + AMP + diphosphate + H(+). Its function is as follows. Ligates lysine onto the cytidine present at position 34 of the AUA codon-specific tRNA(Ile) that contains the anticodon CAU, in an ATP-dependent manner. Cytidine is converted to lysidine, thus changing the amino acid specificity of the tRNA from methionine to isoleucine. The sequence is that of tRNA(Ile)-lysidine synthase from Xylella fastidiosa (strain Temecula1 / ATCC 700964).